We begin with the raw amino-acid sequence, 373 residues long: Phospho-N-acetylmuramoyl-pentapeptide-transferase (373 aa).

10 consecutive transmembrane segments (helical) span residues 34–54 (GALFTSALIVFLFGPRIISSL), 78–98 (TPTMGGLMILAGIVVSSLLWA), 100–120 (LANVYVVATLLVTLGFGAIGF), 141–161 (LGLEFIIAAIAVYFMMNTALS), 181–201 (FMLNLGMFFVLFGAFVIVSAG), 212–232 (GLAIVPVMIAAASFGVIAYLA), 252–272 (LAVVLGAVIGAGLGFLWFNAP), 275–295 (AIFMGDTGSLALGGLIGTVAV), 301–321 (IVMAIIGGLFVLEALSVIIQV), and 350–370 (QVVVRFWIVAVILAMIGLSTL).

It belongs to the glycosyltransferase 4 family. MraY subfamily. Mg(2+) is required as a cofactor.

Its subcellular location is the cell inner membrane. It catalyses the reaction UDP-N-acetyl-alpha-D-muramoyl-L-alanyl-gamma-D-glutamyl-meso-2,6-diaminopimeloyl-D-alanyl-D-alanine + di-trans,octa-cis-undecaprenyl phosphate = di-trans,octa-cis-undecaprenyl diphospho-N-acetyl-alpha-D-muramoyl-L-alanyl-D-glutamyl-meso-2,6-diaminopimeloyl-D-alanyl-D-alanine + UMP. The protein operates within cell wall biogenesis; peptidoglycan biosynthesis. In terms of biological role, catalyzes the initial step of the lipid cycle reactions in the biosynthesis of the cell wall peptidoglycan: transfers peptidoglycan precursor phospho-MurNAc-pentapeptide from UDP-MurNAc-pentapeptide onto the lipid carrier undecaprenyl phosphate, yielding undecaprenyl-pyrophosphoryl-MurNAc-pentapeptide, known as lipid I. The polypeptide is Phospho-N-acetylmuramoyl-pentapeptide-transferase (Rhizobium rhizogenes (strain K84 / ATCC BAA-868) (Agrobacterium radiobacter)).